Reading from the N-terminus, the 320-residue chain is tRNA U34 carboxymethyltransferase (320 aa).

Carboxy-S-adenosyl-L-methionine-binding positions include Lys-87, Trp-101, Lys-106, Gly-126, 148–150 (EPS), 176–177 (VE), Met-192, Tyr-196, and Arg-311.

Belongs to the class I-like SAM-binding methyltransferase superfamily. CmoB family. In terms of assembly, homotetramer.

The catalysed reaction is carboxy-S-adenosyl-L-methionine + 5-hydroxyuridine(34) in tRNA = 5-carboxymethoxyuridine(34) in tRNA + S-adenosyl-L-homocysteine + H(+). Its function is as follows. Catalyzes carboxymethyl transfer from carboxy-S-adenosyl-L-methionine (Cx-SAM) to 5-hydroxyuridine (ho5U) to form 5-carboxymethoxyuridine (cmo5U) at position 34 in tRNAs. In Desulfotalea psychrophila (strain LSv54 / DSM 12343), this protein is tRNA U34 carboxymethyltransferase.